Consider the following 422-residue polypeptide: Protein phosphatase methylesterase 1 (422 aa).

Residues 1–27 (MSDMFRKSVLNKLPHLPPTRAPWADES) form a disordered region. Residues Ser207, Asp234, and His371 contribute to the active site.

The protein belongs to the AB hydrolase superfamily.

The enzyme catalyses [phosphatase 2A protein]-C-terminal L-leucine methyl ester + H2O = [phosphatase 2A protein]-C-terminal L-leucine + methanol + H(+). Demethylates proteins that have been reversibly carboxymethylated. Demethylates the phosphatase PP2A catalytic subunit. The chain is Protein phosphatase methylesterase 1 (PPE1) from Cryptococcus neoformans var. neoformans serotype D (strain JEC21 / ATCC MYA-565) (Filobasidiella neoformans).